Reading from the N-terminus, the 89-residue chain is Small ribosomal subunit protein uS14 (89 aa).

Belongs to the universal ribosomal protein uS14 family. In terms of assembly, part of the 30S ribosomal subunit. Contacts proteins S3 and S10.

Its function is as follows. Binds 16S rRNA, required for the assembly of 30S particles and may also be responsible for determining the conformation of the 16S rRNA at the A site. The chain is Small ribosomal subunit protein uS14 from Chlorobium limicola (strain DSM 245 / NBRC 103803 / 6330).